Reading from the N-terminus, the 179-residue chain is Alkyl hydroperoxide reductase AhpD (179 aa).

The active-site Proton donor is the Cys-130. Cys-130 and Cys-133 are joined by a disulfide. The Cysteine sulfenic acid (-SOH) intermediate role is filled by Cys-133.

This sequence belongs to the AhpD family. In terms of assembly, homotrimer.

The catalysed reaction is N(6)-[(R)-dihydrolipoyl]-L-lysyl-[lipoyl-carrier protein] + a hydroperoxide = N(6)-[(R)-lipoyl]-L-lysyl-[lipoyl-carrier protein] + an alcohol + H2O. Antioxidant protein with alkyl hydroperoxidase activity. Required for the reduction of the AhpC active site cysteine residues and for the regeneration of the AhpC enzyme activity. The sequence is that of Alkyl hydroperoxide reductase AhpD from Nocardia farcinica (strain IFM 10152).